Here is a 95-residue protein sequence, read N- to C-terminus: Citrate lyase acyl carrier protein (95 aa).

S14 carries the O-(phosphoribosyl dephospho-coenzyme A)serine modification.

Belongs to the CitD family. As to quaternary structure, oligomer with a subunit composition of (alpha,beta,gamma)6.

It localises to the cytoplasm. Functionally, covalent carrier of the coenzyme of citrate lyase. The chain is Citrate lyase acyl carrier protein from Haemophilus influenzae (strain 86-028NP).